The following is a 242-amino-acid chain: DNA repair protein RecO (242 aa).

The protein belongs to the RecO family. In terms of assembly, monomer.

Its function is as follows. Involved in DNA repair and RecF pathway recombination. The polypeptide is DNA repair protein RecO (Salmonella schwarzengrund (strain CVM19633)).